The chain runs to 892 residues: Ataxin-7 (892 aa).

Residues 1–15 are compositionally biased toward basic and acidic residues; it reads MSERAADDVRGEPRR. 2 disordered regions span residues 1-74 and 195-247; these read MSER…SAAA and SKGG…SRVP. A compositionally biased stretch (low complexity) spans 16–38; it reads AAAAAGGAAAAAARQQQQQQQQQ. Residues 39-55 are compositionally biased toward pro residues; the sequence is QPPPPQPQRQQHPPPPP. Positions 195–222 are enriched in low complexity; that stretch reads SKGGSASGSNRSSSGGVLSASSSSSKLL. Lysine 257 participates in a covalent cross-link: Glycyl lysine isopeptide (Lys-Gly) (interchain with G-Cter in SUMO); alternate. Lysine 257 participates in a covalent cross-link: Glycyl lysine isopeptide (Lys-Gly) (interchain with G-Cter in SUMO2); alternate. 4 disordered regions span residues 298–328, 389–505, 616–730, and 818–892; these read PTLP…NSNN, HKNK…ESVE, KSVP…SSHS, and SHGS…KARP. 2 stretches are compositionally biased toward basic and acidic residues: residues 318-327 and 389-403; these read LEKKPEDNSN and HKNK…RHPD. In terms of domain architecture, SCA7 spans 334–401; it reads KRLSEREFDP…KTREKELIRH (68 aa). 3 stretches are compositionally biased toward pro residues: residues 405 to 419, 448 to 458, and 468 to 483; these read QQPP…PAPP, HTPSLPRPPGC, and IDPP…PLPA. Acidic residues predominate over residues 493–502; it reads EEGEGDDKEE. The span at 616–629 shows a compositional bias: polar residues; sequence KSVPAHGTTLNAQP. Low complexity predominate over residues 640 to 669; it reads SMQSRQVSSSSSSPSTPSGLSSVPSSPMSR. Residues 670 to 680 are compositionally biased toward basic residues; it reads KPQKLKSSKSL. A compositionally biased stretch (polar residues) spans 685-695; the sequence is SSGNSTNCQNA. Low complexity-rich tracts occupy residues 716 to 730 and 840 to 851; these read HSSS…SSHS and SPSSSSINNSSS.

This sequence belongs to the ataxin-7 family. As to quaternary structure, component of the SAGA transcription coactivator-HAT complex, at least composed of SUPT3H, GCN5L2, TAF5L, TAF6L, SUPT7L, TADA3L, TAD1L, TAF10, TAF12, TRRAP, TAF9 and ATXN7. The STAGA core complex is associated with a subcomplex required for histone deubiquitination composed of ATXN7L3, ENY2 and USP22. Interacts with SORBS1, PSMC1 and CRX. Interacts with TRRAP, GCN5L2 and TAF10. Interacts with alpha tubulin. In terms of processing, proteolytically cleaved by caspase-7 (CASP7). The cleavage may be involved in SCA7 degeneration: the isoform fragments may exert distinct toxic influences that could contribute to selective neurodegeneration. Post-translationally, sumoylation decreases the aggregation propensity and cellular toxicity of forms with an expanded poly-Gln region but has no effect on subcellular location or interaction with components of the STAGA complex. Isoform a is expressed in CNS, but is expressed predominantly in the peripherical tissues. In terms of tissue distribution, isoform b is expressed in CNS. Also highly expressed in the frontal lobe, skeletal muscle and spinal cord and is expressed at a lower level in the lung, lymphoblast and intestine.

Its subcellular location is the nucleus. The protein resides in the nucleolus. It localises to the nucleus matrix. It is found in the cytoplasm. The protein localises to the cytoskeleton. In terms of biological role, acts as a component of the SAGA (aka STAGA) transcription coactivator-HAT complex. Mediates the interaction of SAGA complex with the CRX and is involved in CRX-dependent gene activation. Probably involved in tethering the deubiquitination module within the SAGA complex. Necessary for microtubule cytoskeleton stabilization. Involved in neurodegeneration. The chain is Ataxin-7 (ATXN7) from Homo sapiens (Human).